The following is a 298-amino-acid chain: Glycine--tRNA ligase alpha subunit (298 aa).

It belongs to the class-II aminoacyl-tRNA synthetase family. In terms of assembly, tetramer of two alpha and two beta subunits.

It is found in the cytoplasm. The catalysed reaction is tRNA(Gly) + glycine + ATP = glycyl-tRNA(Gly) + AMP + diphosphate. This is Glycine--tRNA ligase alpha subunit from Lacticaseibacillus paracasei (strain ATCC 334 / BCRC 17002 / CCUG 31169 / CIP 107868 / KCTC 3260 / NRRL B-441) (Lactobacillus paracasei).